We begin with the raw amino-acid sequence, 280 residues long: 4-diphosphocytidyl-2-C-methyl-D-erythritol kinase (280 aa).

Lys-11 is a catalytic residue. Residue 95–105 (PVAAGLGGGSS) participates in ATP binding. Asp-137 is an active-site residue.

The protein belongs to the GHMP kinase family. IspE subfamily.

The enzyme catalyses 4-CDP-2-C-methyl-D-erythritol + ATP = 4-CDP-2-C-methyl-D-erythritol 2-phosphate + ADP + H(+). Its pathway is isoprenoid biosynthesis; isopentenyl diphosphate biosynthesis via DXP pathway; isopentenyl diphosphate from 1-deoxy-D-xylulose 5-phosphate: step 3/6. In terms of biological role, catalyzes the phosphorylation of the position 2 hydroxy group of 4-diphosphocytidyl-2C-methyl-D-erythritol. The chain is 4-diphosphocytidyl-2-C-methyl-D-erythritol kinase from Pelobacter propionicus (strain DSM 2379 / NBRC 103807 / OttBd1).